Here is a 437-residue protein sequence, read N- to C-terminus: Protein RecA (437 aa).

ATP is bound at residue 69–76; sequence GPESSGKT. The tract at residues 343–437 is disordered; sequence HDAAVRTSPD…GNGKSVKRKG (95 aa). Polar residues-rich tracts occupy residues 350–371, 380–391, and 400–426; these read SPDT…SGSP, GAVNNSRDSTGG, and LNLS…NQKP.

It belongs to the RecA family.

Its subcellular location is the cytoplasm. Functionally, can catalyze the hydrolysis of ATP in the presence of single-stranded DNA, the ATP-dependent uptake of single-stranded DNA by duplex DNA, and the ATP-dependent hybridization of homologous single-stranded DNAs. It interacts with LexA causing its activation and leading to its autocatalytic cleavage. This chain is Protein RecA, found in Tropheryma whipplei (strain Twist) (Whipple's bacillus).